A 442-amino-acid polypeptide reads, in one-letter code: GTPase Der (442 aa).

EngA-type G domains follow at residues 3–167 (PTIV…PADD) and 177–350 (PRVA…AAAM). GTP is bound by residues 9 to 16 (GRPNVGKS), 56 to 60 (DTAGF), 119 to 122 (NKAE), 183 to 190 (GRPNVGKS), 230 to 234 (DTAGL), and 295 to 298 (NKWD). The region spanning 351–435 (SNLSTPRLTR…PLRIQFRTAH (85 aa)) is the KH-like domain.

The protein belongs to the TRAFAC class TrmE-Era-EngA-EngB-Septin-like GTPase superfamily. EngA (Der) GTPase family. In terms of assembly, associates with the 50S ribosomal subunit.

Its function is as follows. GTPase that plays an essential role in the late steps of ribosome biogenesis. In Azoarcus sp. (strain BH72), this protein is GTPase Der.